The primary structure comprises 419 residues: Histidine--tRNA ligase (419 aa).

Belongs to the class-II aminoacyl-tRNA synthetase family. Homodimer.

The protein localises to the cytoplasm. It carries out the reaction tRNA(His) + L-histidine + ATP = L-histidyl-tRNA(His) + AMP + diphosphate + H(+). This Trichlorobacter lovleyi (strain ATCC BAA-1151 / DSM 17278 / SZ) (Geobacter lovleyi) protein is Histidine--tRNA ligase.